The primary structure comprises 1310 residues: Major viral transcription factor ICP4 homolog (1310 aa).

Disordered stretches follow at residues Ala-117–Glu-271, Gly-285–Ile-454, and Gly-636–Lys-697. A compositionally biased stretch (basic and acidic residues) spans Pro-341–Glu-350. Low complexity-rich tracts occupy residues Phe-351–Ser-364, Pro-392–Ser-407, and Pro-648–Ala-666. The Nuclear localization signal motif lies at Arg-677–Lys-685. Phosphoserine; by viral VZV ORF66 occurs at positions 686 and 722. Disordered regions lie at residues Gly-1193–Val-1258 and Glu-1282–Gly-1310. Over residues Arg-1217 to Glu-1227 the composition is skewed to basic and acidic residues. Acidic residues predominate over residues Leu-1228–Asp-1250.

Belongs to the herpesviridae ICP4 family. Interacts with IE4 and IE63. Interacts with host USF1 and SP1. Post-translationally, phosphorylated by ORF66 protein kinase on Ser-686 and Ser-722. Also phosphorylated by ORF47 protein kinase and by human CSNK2A1/CKII.

It is found in the host nucleus. The protein localises to the host cytoplasm. The protein resides in the virion tegument. Its function is as follows. Transcriptional transactivator. May interact with and recruit specific components of the general transcription machinery to viral promoters and stabilize their formation for transcription initiation. Negatively regulates its own transcription. This immediate early (EI) protein may be necessary in virion for viral pathogenesis. This is Major viral transcription factor ICP4 homolog from Homo sapiens (Human).